The primary structure comprises 408 residues: Putative mannan endo-1,4-beta-mannosidase P (408 aa).

The first 23 residues, 1–23 (MKCLCFIVLLAIVIAQSYVGVEA), serve as a signal peptide directing secretion. N-linked (GlcNAc...) asparagine glycosylation is present at Asn-73. Substrate contacts are provided by Trp-85 and Asn-201. The active-site Proton donor is Glu-202. Catalysis depends on Glu-322, which acts as the Nucleophile. Trp-364 contributes to the substrate binding site.

This sequence belongs to the glycosyl hydrolase 5 (cellulase A) family.

It localises to the secreted. It carries out the reaction Random hydrolysis of (1-&gt;4)-beta-D-mannosidic linkages in mannans, galactomannans and glucomannans.. The chain is Putative mannan endo-1,4-beta-mannosidase P (MANP) from Arabidopsis thaliana (Mouse-ear cress).